The chain runs to 297 residues: Nucleotide-binding protein BURPS668_0577 (297 aa).

8 to 15 provides a ligand contact to ATP; the sequence is GISGSGKS. A GTP-binding site is contributed by 57–60; it reads DARS.

The protein belongs to the RapZ-like family.

In terms of biological role, displays ATPase and GTPase activities. The polypeptide is Nucleotide-binding protein BURPS668_0577 (Burkholderia pseudomallei (strain 668)).